Here is a 66-residue protein sequence, read N- to C-terminus: DNA gyrase inhibitor YacG (66 aa).

4 residues coordinate Zn(2+): cysteine 9, cysteine 12, cysteine 28, and cysteine 32.

The protein belongs to the DNA gyrase inhibitor YacG family. Interacts with GyrB. It depends on Zn(2+) as a cofactor.

Inhibits all the catalytic activities of DNA gyrase by preventing its interaction with DNA. Acts by binding directly to the C-terminal domain of GyrB, which probably disrupts DNA binding by the gyrase. The polypeptide is DNA gyrase inhibitor YacG (Pseudomonas aeruginosa (strain LESB58)).